The sequence spans 29 residues: Snake venom metalloproteinase bothrolysin (29 aa).

Residues 6 to 29 (RYIELFLVVDSGMFMKYNGNSDKI) enclose the Peptidase M12B domain. E9 is a binding site for Ca(2+).

This sequence belongs to the venom metalloproteinase (M12B) family. Zn(2+) serves as cofactor. Expressed by the venom gland.

It is found in the secreted. It carries out the reaction Cleavage of 4-Gln-|-His-5, 9-Ser-|-His-10 and 14-Ala-|-Leu-15 of insulin B chain and Pro-|-Phe of angiotensin I.. Its function is as follows. Snake venom zinc metalloproteinase that impairs hemostasis in the envenomed animal. The sequence is that of Snake venom metalloproteinase bothrolysin from Bothrops jararaca (Jararaca).